Here is a 511-residue protein sequence, read N- to C-terminus: GMP synthase [glutamine-hydrolyzing] (511 aa).

Residues 5–195 (LILVLDFGGQ…LYKICGCSGD (191 aa)) form the Glutamine amidotransferase type-1 domain. Cys82 functions as the Nucleophile in the catalytic mechanism. Catalysis depends on residues His169 and Glu171. Residues 196 to 386 (WKMASFIEHS…LGIPEDIVMR (191 aa)) form the GMPS ATP-PPase domain. 223 to 229 (SGGVDSS) provides a ligand contact to ATP.

As to quaternary structure, homodimer.

It carries out the reaction XMP + L-glutamine + ATP + H2O = GMP + L-glutamate + AMP + diphosphate + 2 H(+). The protein operates within purine metabolism; GMP biosynthesis; GMP from XMP (L-Gln route): step 1/1. Its function is as follows. Catalyzes the synthesis of GMP from XMP. In Acetivibrio thermocellus (strain ATCC 27405 / DSM 1237 / JCM 9322 / NBRC 103400 / NCIMB 10682 / NRRL B-4536 / VPI 7372) (Clostridium thermocellum), this protein is GMP synthase [glutamine-hydrolyzing].